The primary structure comprises 141 residues: ATP synthase epsilon chain (141 aa).

It belongs to the ATPase epsilon chain family. As to quaternary structure, F-type ATPases have 2 components, CF(1) - the catalytic core - and CF(0) - the membrane proton channel. CF(1) has five subunits: alpha(3), beta(3), gamma(1), delta(1), epsilon(1). CF(0) has three main subunits: a, b and c.

Its subcellular location is the cell inner membrane. Functionally, produces ATP from ADP in the presence of a proton gradient across the membrane. In Cellvibrio japonicus (strain Ueda107) (Pseudomonas fluorescens subsp. cellulosa), this protein is ATP synthase epsilon chain.